Reading from the N-terminus, the 533-residue chain is Putative replication factor C large subunit (533 aa).

Residues 1-11 (MSKTAKNTKTI) show a composition bias toward polar residues. The segment at 1 to 31 (MSKTAKNTKTIKSVKSVNKDNKPNKDNKDDK) is disordered. Over residues 17–31 (VNKDNKPNKDNKDDK) the composition is skewed to basic and acidic residues.

Belongs to the activator 1 large subunit family.

Its function is as follows. Part of the RFC clamp loader complex which loads the PCNA sliding clamp onto DNA. The polypeptide is Putative replication factor C large subunit (Acanthamoeba polyphaga (Amoeba)).